A 361-amino-acid polypeptide reads, in one-letter code: MKILVTGGAGFIGSAVVRHIINNTQDSVVNVDKLTYAGNRESLADVSDSERYVFEHADICDAPAMARIFAQHQPDAVMHLAAESHVDRSITGPAAFIETNIVGTYVLLEAARNYWSALDSDKKNSFRFHHISTDEVYGDLPHPDEVNNTEELPLFTETTAYAPSSPYSASKASSDHLVRAWKRTYGLPTIVTNCSNNYGPYHFPEKLIPLVILNALEGKALPIYGKGDQIRDWLYVEDHARALYTVVTEGKAGETYNIGGHNEKKNIDVVLTICDLLDEIVPKEKSYREQITYVADRPGHDRRYAIDAEKIGRALGWKPQETFESGIRKTVEWYLSNTKWVDNVKSGAYQSWIEQNYEGRQ.

Residues F11 to I12, D32 to T35, D58 to I59, L80 to S84, and T99 contribute to the NAD(+) site. S84 contacts substrate. T133 provides a ligand contact to substrate. D134 functions as the Proton donor in the catalytic mechanism. Catalysis depends on proton acceptor residues E135 and Y167. Residue Y167–K171 participates in NAD(+) binding. A substrate-binding site is contributed by N196. An NAD(+)-binding site is contributed by N197. Substrate contacts are provided by residues K206 to L207, P222 to Y224, R231, N266, and D296 to H300.

The protein belongs to the NAD(P)-dependent epimerase/dehydratase family. dTDP-glucose dehydratase subfamily. As to quaternary structure, homodimer. NAD(+) is required as a cofactor.

It catalyses the reaction dTDP-alpha-D-glucose = dTDP-4-dehydro-6-deoxy-alpha-D-glucose + H2O. Its pathway is carbohydrate biosynthesis; dTDP-L-rhamnose biosynthesis. It participates in bacterial outer membrane biogenesis; LPS O-antigen biosynthesis. Catalyzes the dehydration of dTDP-D-glucose to form dTDP-6-deoxy-D-xylo-4-hexulose via a three-step process involving oxidation, dehydration and reduction. This Escherichia coli (strain K12) protein is dTDP-glucose 4,6-dehydratase 1 (rfbB).